Reading from the N-terminus, the 1322-residue chain is MIVLKGASALSPFRLARFESRLQTTVPELRIVGAWHCYLIQIKSGHTLDMSALHRILQAESVSELPQKHVVSRYVMPRLGTHSPWSSKTTELLHGADQPIARIERGTRIDLLGWSANAATCPAIAKQLYDPMTQSLLESEDEVKTLFNVPEPRPLERIALIDLEHANTRLGLALTADEIDYLRTRYTELNRVPSDVELMMFAQANSEHCRHKIFNATWTIDDKEQPYSLFQMIKHTHQHTPQYTLSAYADNAAVIEGHPTTRYRPDPITGEYRHEAVLPGAFQIKVETHNHPTAIAPFPGASTGAGGEIRDEGATGRGGKPKAGLSGFSVSHLRIPTLPHPWETPRALNPRMASALDIMLEGPLGSAAFNNEFGRPNLLGYFRSFELSASKTLTRAYDKPIMLAGGLGAIDRIHIKKLRLQPGDVIIVLGGPAMLIGLGGGAASSVTSGTSTEALDFASVQRDNPEMQRRCQEVIDHCVALGTNNPIRSFHDVGAGGLSNAIPELLHDSEVGGVIDLAKIPSDDPSLSPLELWCNESQERYVLGISAPHLQAFAAICSRERCPFAAVGVATATEQLIVGYGVTLPAALHVTEQQTPQRANRTETSPTPNTLVSPVREAFAIDLPMDVLFGKAPKMHRNTAHPPPPQWPTLDSTQLDLHHAGLRVLAHPTVAAKNFLVTIGDRSIGGLTAREQMIGPWQLPLADCAITLAGFSSYAGEAFAIGERAPLALLNSAAAARMAVGEAITNLCAAPVESLSMVKLSANWMAAAEYPGEDALLYDAVKAIGIELCPALDISIPVGKDSLSMQSRWQGDGATHTCISPVSLVISAFTPVADARRQLTPLLHHQTNSELWLIALDGGKQRLGGSVLAQVHADSAALPAFGGECPDLDTPETLRAFFALMNDARNAGLLLAYHDRSDGGAFAALCEMAFASHLGLDITCDNRTEHLFPHLFNEELGAIVQVADEHRTAFADLVEHHGLTAYTQRIAHPTTAPSIRVMHNDQCLAQWTWETLFDAWWSVTHAIQRLRDNPECADEEREIARTFTAPGLKPTLSFDPAADVAMPFISTGIRPKVAILREQGINGHIEMALCFERAGFHSVDIHMNDLITGRVHLDEFVGLAACGGFSYGDVLGAGRGWATSILERTALRDQFAAFFTRTDRFALGVCNGCQMLSQLKSMIPGAEHWPRFVRNRSEQFEARTALLEVIQSPSIFLSGMAGSRLPVAVAHGEGYAMFDTPADQAAAHVALRYINGHGQAATHYPLNPNGSPNGITGLTTTDGRITILMPHPERTPRTINLSWCPNEWGEDAPWLRLFRNARAWVG.

Residues 300–311 (GASTGAGGEIRD) and alanine 702 contribute to the ATP site. Residues aspartate 703, glutamate 742, asparagine 746, and aspartate 915 each coordinate Mg(2+). Serine 917 serves as a coordination point for ATP. The region spanning 1073–1322 (VAILREQGIN…LFRNARAWVG (250 aa)) is the Glutamine amidotransferase type-1 domain. Cysteine 1166 functions as the Nucleophile in the catalytic mechanism. Catalysis depends on residues histidine 1287 and glutamate 1289.

The protein in the N-terminal section; belongs to the FGAMS family. As to quaternary structure, monomer.

Its subcellular location is the cytoplasm. The enzyme catalyses N(2)-formyl-N(1)-(5-phospho-beta-D-ribosyl)glycinamide + L-glutamine + ATP + H2O = 2-formamido-N(1)-(5-O-phospho-beta-D-ribosyl)acetamidine + L-glutamate + ADP + phosphate + H(+). The protein operates within purine metabolism; IMP biosynthesis via de novo pathway; 5-amino-1-(5-phospho-D-ribosyl)imidazole from N(2)-formyl-N(1)-(5-phospho-D-ribosyl)glycinamide: step 1/2. In terms of biological role, phosphoribosylformylglycinamidine synthase involved in the purines biosynthetic pathway. Catalyzes the ATP-dependent conversion of formylglycinamide ribonucleotide (FGAR) and glutamine to yield formylglycinamidine ribonucleotide (FGAM) and glutamate. This chain is Phosphoribosylformylglycinamidine synthase, found in Xylella fastidiosa (strain Temecula1 / ATCC 700964).